The primary structure comprises 232 residues: Large ribosomal subunit protein uL1 (232 aa).

The protein belongs to the universal ribosomal protein uL1 family. Part of the 50S ribosomal subunit.

Binds directly to 23S rRNA. The L1 stalk is quite mobile in the ribosome, and is involved in E site tRNA release. In terms of biological role, protein L1 is also a translational repressor protein, it controls the translation of the L11 operon by binding to its mRNA. This chain is Large ribosomal subunit protein uL1, found in Francisella tularensis subsp. holarctica (strain LVS).